We begin with the raw amino-acid sequence, 164 residues long: Transcription antitermination protein NusB (164 aa).

Belongs to the NusB family.

In terms of biological role, involved in transcription antitermination. Required for transcription of ribosomal RNA (rRNA) genes. Binds specifically to the boxA antiterminator sequence of the ribosomal RNA (rrn) operons. The sequence is that of Transcription antitermination protein NusB from Chlamydia muridarum (strain MoPn / Nigg).